We begin with the raw amino-acid sequence, 149 residues long: Probable flagellum biosynthesis repressor protein FlbT (149 aa).

The protein belongs to the FlbT family.

Its function is as follows. Has a post-transcriptional repressor function in flagellum biogenesis. Associates with the 5'-UTR of fljK mRNA and promotes its degradation. The protein is Probable flagellum biosynthesis repressor protein FlbT of Allorhizobium ampelinum (strain ATCC BAA-846 / DSM 112012 / S4) (Agrobacterium vitis (strain S4)).